A 52-amino-acid polypeptide reads, in one-letter code: ATP synthase protein 8 (52 aa).

Residues 7–23 (MMWFSLFIMFSMTMMLF) traverse the membrane as a helical segment.

The protein belongs to the ATPase protein 8 family. In terms of assembly, F-type ATPases have 2 components, CF(1) - the catalytic core - and CF(0) - the membrane proton channel.

The protein resides in the mitochondrion membrane. Functionally, mitochondrial membrane ATP synthase (F(1)F(0) ATP synthase or Complex V) produces ATP from ADP in the presence of a proton gradient across the membrane which is generated by electron transport complexes of the respiratory chain. F-type ATPases consist of two structural domains, F(1) - containing the extramembraneous catalytic core and F(0) - containing the membrane proton channel, linked together by a central stalk and a peripheral stalk. During catalysis, ATP synthesis in the catalytic domain of F(1) is coupled via a rotary mechanism of the central stalk subunits to proton translocation. Part of the complex F(0) domain. Minor subunit located with subunit a in the membrane. This is ATP synthase protein 8 (MT-ATP8) from Locusta migratoria (Migratory locust).